Consider the following 274-residue polypeptide: MTPEQSPLGKPSAYTEQYDASLLFPIARKNAREAIGIGAQLPFFGTDIWNAYELSWLNARGKPQIAVATFFVPADSPNIVESKSFKLYLGSFAQTAFESMETVRDTIKRDVSASCGATVSVHLTAPYEFGKLQMEEFEGLSLDRLDLDTDVYHPDASLLTAALDEAPVEETLVSNLLKSNCPVTGQPDWGSVQIHYVGPQIDHAGLLRYIISYRNHTGFHEQCVEKIFLDVLKACKPVKLAVYARYTRRGGLDINPFRTNYNLPMPDNMRLARQ.

80–82 (VES) contacts substrate. An NADPH-binding site is contributed by 82–83 (SK). Cys181 acts as the Thioimide intermediate in catalysis. Catalysis depends on Asp188, which acts as the Proton donor. 220–221 (HE) is a binding site for substrate. 249–250 (RG) provides a ligand contact to NADPH.

This sequence belongs to the GTP cyclohydrolase I family. QueF type 2 subfamily. In terms of assembly, homodimer.

The protein resides in the cytoplasm. It carries out the reaction 7-aminomethyl-7-carbaguanine + 2 NADP(+) = 7-cyano-7-deazaguanine + 2 NADPH + 3 H(+). It functions in the pathway tRNA modification; tRNA-queuosine biosynthesis. In terms of biological role, catalyzes the NADPH-dependent reduction of 7-cyano-7-deazaguanine (preQ0) to 7-aminomethyl-7-deazaguanine (preQ1). The sequence is that of NADPH-dependent 7-cyano-7-deazaguanine reductase from Paraburkholderia phytofirmans (strain DSM 17436 / LMG 22146 / PsJN) (Burkholderia phytofirmans).